The chain runs to 321 residues: Anthranilate phosphoribosyltransferase (321 aa).

5-phospho-alpha-D-ribose 1-diphosphate is bound by residues Gly72, 75–76, Thr80, 82–85, 99–107, and Ser111; these read GD, NVST, and KHGNVSITS. An anthranilate-binding site is contributed by Gly72. Ser84 is a Mg(2+) binding site. Position 102 (Asn102) interacts with anthranilate. An anthranilate-binding site is contributed by Arg157. Residues Asp216 and Glu217 each coordinate Mg(2+).

This sequence belongs to the anthranilate phosphoribosyltransferase family. As to quaternary structure, homodimer. Mg(2+) is required as a cofactor.

The enzyme catalyses N-(5-phospho-beta-D-ribosyl)anthranilate + diphosphate = 5-phospho-alpha-D-ribose 1-diphosphate + anthranilate. The protein operates within amino-acid biosynthesis; L-tryptophan biosynthesis; L-tryptophan from chorismate: step 2/5. Catalyzes the transfer of the phosphoribosyl group of 5-phosphorylribose-1-pyrophosphate (PRPP) to anthranilate to yield N-(5'-phosphoribosyl)-anthranilate (PRA). The chain is Anthranilate phosphoribosyltransferase from Methanococcus maripaludis (strain C5 / ATCC BAA-1333).